Here is a 289-residue protein sequence, read N- to C-terminus: Shikimate dehydrogenase (NADP(+)) (289 aa).

Shikimate-binding positions include 22-24 (SRS) and Thr-69. Lys-73 serves as the catalytic Proton acceptor. Glu-85 contributes to the NADP(+) binding site. Positions 94 and 109 each coordinate shikimate. Residues 134–138 (GAGGA), 158–163 (NRTLSR), and Ile-226 each bind NADP(+). Tyr-228 provides a ligand contact to shikimate. Gly-249 lines the NADP(+) pocket.

Belongs to the shikimate dehydrogenase family. In terms of assembly, homodimer.

The catalysed reaction is shikimate + NADP(+) = 3-dehydroshikimate + NADPH + H(+). It participates in metabolic intermediate biosynthesis; chorismate biosynthesis; chorismate from D-erythrose 4-phosphate and phosphoenolpyruvate: step 4/7. In terms of biological role, involved in the biosynthesis of the chorismate, which leads to the biosynthesis of aromatic amino acids. Catalyzes the reversible NADPH linked reduction of 3-dehydroshikimate (DHSA) to yield shikimate (SA). In Brucella ovis (strain ATCC 25840 / 63/290 / NCTC 10512), this protein is Shikimate dehydrogenase (NADP(+)).